The following is a 527-amino-acid chain: N-acetylglutamate synthase, mitochondrial (527 aa).

The transit peptide at 1–18 (MATAWVATALRSAAAARR) directs the protein to the mitochondrion. The tract at residues 14–91 (AAARRLRSPG…PLESPAPPAG (78 aa)) is disordered. The interval 19–369 (LRSPGGPGGS…CGTLFKNAER (351 aa)) is amino-acid kinase domain (AAK). Residues 54 to 63 (AHAEDAEGAK) show a composition bias toward basic and acidic residues. Over residues 77–89 (TPLPTPLESPAPP) the composition is skewed to pro residues. One can recognise an N-acetyltransferase domain in the interval 368–519 (ERMLRVRNLD…HAKGLPDSFC (152 aa)). Substrate is bound by residues lysine 394, lysine 437, and 467-472 (RSRVTN).

Belongs to the acetyltransferase family. As to quaternary structure, homodimer. Homotetramer. Probably processed by mitochondrial processing peptidase (MPP). The long form has not yet been isolated. In terms of tissue distribution, highly expressed in the liver and small intestine. Weakly expressed in the kidney, spleen and testis.

Its subcellular location is the mitochondrion matrix. It catalyses the reaction L-glutamate + acetyl-CoA = N-acetyl-L-glutamate + CoA + H(+). Its pathway is amino-acid biosynthesis; L-arginine biosynthesis; N(2)-acetyl-L-ornithine from L-glutamate: step 1/4. Its activity is regulated as follows. Increased by L-arginine. Its function is as follows. Plays a role in the regulation of ureagenesis by producing the essential cofactor N-acetylglutamate (NAG), thus modulating carbamoylphosphate synthase I (CPS1) activity. The protein is N-acetylglutamate synthase, mitochondrial (Nags) of Mus musculus (Mouse).